Reading from the N-terminus, the 478-residue chain is ATP synthase subunit beta (478 aa).

151–158 is a binding site for ATP; the sequence is GGAGVGKT.

This sequence belongs to the ATPase alpha/beta chains family. As to quaternary structure, F-type ATPases have 2 components, CF(1) - the catalytic core - and CF(0) - the membrane proton channel. CF(1) has five subunits: alpha(3), beta(3), gamma(1), delta(1), epsilon(1). CF(0) has three main subunits: a(1), b(2) and c(9-12). The alpha and beta chains form an alternating ring which encloses part of the gamma chain. CF(1) is attached to CF(0) by a central stalk formed by the gamma and epsilon chains, while a peripheral stalk is formed by the delta and b chains.

It is found in the cell inner membrane. It catalyses the reaction ATP + H2O + 4 H(+)(in) = ADP + phosphate + 5 H(+)(out). Its function is as follows. Produces ATP from ADP in the presence of a proton gradient across the membrane. The catalytic sites are hosted primarily by the beta subunits. The protein is ATP synthase subunit beta of Xanthobacter autotrophicus (strain ATCC BAA-1158 / Py2).